The sequence spans 158 residues: Crossover junction endodeoxyribonuclease RuvC (158 aa).

Residues D7, E66, and D139 contribute to the active site. Mg(2+) is bound by residues D7, E66, and D139.

It belongs to the RuvC family. Homodimer which binds Holliday junction (HJ) DNA. The HJ becomes 2-fold symmetrical on binding to RuvC with unstacked arms; it has a different conformation from HJ DNA in complex with RuvA. In the full resolvosome a probable DNA-RuvA(4)-RuvB(12)-RuvC(2) complex forms which resolves the HJ. The cofactor is Mg(2+).

The protein resides in the cytoplasm. It catalyses the reaction Endonucleolytic cleavage at a junction such as a reciprocal single-stranded crossover between two homologous DNA duplexes (Holliday junction).. Its function is as follows. The RuvA-RuvB-RuvC complex processes Holliday junction (HJ) DNA during genetic recombination and DNA repair. Endonuclease that resolves HJ intermediates. Cleaves cruciform DNA by making single-stranded nicks across the HJ at symmetrical positions within the homologous arms, yielding a 5'-phosphate and a 3'-hydroxyl group; requires a central core of homology in the junction. The consensus cleavage sequence is 5'-(A/T)TT(C/G)-3'. Cleavage occurs on the 3'-side of the TT dinucleotide at the point of strand exchange. HJ branch migration catalyzed by RuvA-RuvB allows RuvC to scan DNA until it finds its consensus sequence, where it cleaves and resolves the cruciform DNA. This chain is Crossover junction endodeoxyribonuclease RuvC, found in Nitratiruptor sp. (strain SB155-2).